Consider the following 105-residue polypeptide: Large ribosomal subunit protein uL24 (105 aa).

This sequence belongs to the universal ribosomal protein uL24 family. In terms of assembly, part of the 50S ribosomal subunit.

Functionally, one of two assembly initiator proteins, it binds directly to the 5'-end of the 23S rRNA, where it nucleates assembly of the 50S subunit. One of the proteins that surrounds the polypeptide exit tunnel on the outside of the subunit. This is Large ribosomal subunit protein uL24 from Acinetobacter baumannii (strain AB307-0294).